The chain runs to 249 residues: DNA repair protein RecO (249 aa).

It belongs to the RecO family.

Involved in DNA repair and RecF pathway recombination. This chain is DNA repair protein RecO, found in Solidesulfovibrio magneticus (strain ATCC 700980 / DSM 13731 / RS-1) (Desulfovibrio magneticus).